The following is an 807-amino-acid chain: Leucine--tRNA ligase (807 aa).

A 'HIGH' region motif is present at residues 38 to 49 (PYPSGSGLHVGH). The 'KMSKS' region signature appears at 579–583 (KMSKS). Position 582 (lysine 582) interacts with ATP.

The protein belongs to the class-I aminoacyl-tRNA synthetase family.

It is found in the cytoplasm. The catalysed reaction is tRNA(Leu) + L-leucine + ATP = L-leucyl-tRNA(Leu) + AMP + diphosphate. The protein is Leucine--tRNA ligase of Mycoplasmopsis pulmonis (strain UAB CTIP) (Mycoplasma pulmonis).